A 95-amino-acid polypeptide reads, in one-letter code: MSDPLRELFDVIEDRKETMPENSYTASLLADDEKGENAALEKVGEEATEFLLAAKDGDTDELAHEGADVVYHMLVVLAQQDMDVEALLAELDDRR.

It belongs to the PRA-PH family.

Its subcellular location is the cytoplasm. It catalyses the reaction 1-(5-phospho-beta-D-ribosyl)-ATP + H2O = 1-(5-phospho-beta-D-ribosyl)-5'-AMP + diphosphate + H(+). The protein operates within amino-acid biosynthesis; L-histidine biosynthesis; L-histidine from 5-phospho-alpha-D-ribose 1-diphosphate: step 2/9. The polypeptide is Phosphoribosyl-ATP pyrophosphatase (Halobacterium salinarum (strain ATCC 29341 / DSM 671 / R1)).